A 349-amino-acid chain; its full sequence is tRNA pseudouridine synthase D (349 aa).

F27 is a substrate binding site. The Nucleophile role is filled by D80. N129 is a binding site for substrate. One can recognise a TRUD domain in the interval 155-303 (GVPNYFGAQR…VEASRRAMLL (149 aa)). Substrate is bound at residue F329.

This sequence belongs to the pseudouridine synthase TruD family.

It carries out the reaction uridine(13) in tRNA = pseudouridine(13) in tRNA. Its function is as follows. Responsible for synthesis of pseudouridine from uracil-13 in transfer RNAs. In Salmonella typhi, this protein is tRNA pseudouridine synthase D.